A 152-amino-acid chain; its full sequence is Protein FERTILITY RESTORER RF2, mitochondrial (152 aa).

A mitochondrion-targeting transit peptide spans 1-52; sequence MSTLVTCSLPGAVTTHASTRRFGGSQFQTSQASCISFKREVSAKAVLRSVRC. The span at 52–69 shows a compositional bias: polar residues; that stretch reads CNATQTQSAQRKSSTATV. The disordered stretch occupies residues 52 to 99; sequence CNATQTQSAQRKSSTATVKRSDPKGKIQGPKLDDGSGGFPPFRFGKGG.

It localises to the mitochondrion. Functionally, restores fertility in rice varieties with LD-type cytoplasmic male sterility (CMS). CMS is caused by genetic incompatibility between nuclei and mitochondria within male reproductive organs. Corresponds to the functional allele of RF2, which is dependent of the presence of Ile-78 in the japonica cultivars Fukuyama and Owarihatamochi (AC F1SZ42), and indica cultivar Kasalath (AC F1SZ41). Non-functional RF2 alleles are found in japonica cultivars Taichung 65 and Nipponbare (AC F1SZ44), where Ile-78 is replaced by Thr-78. This is Protein FERTILITY RESTORER RF2, mitochondrial from Oryza sativa subsp. japonica (Rice).